We begin with the raw amino-acid sequence, 133 residues long: Small ribosomal subunit protein uS11 (133 aa).

The protein belongs to the universal ribosomal protein uS11 family. In terms of assembly, part of the 30S ribosomal subunit. Interacts with proteins S7 and S18. Binds to IF-3.

Functionally, located on the platform of the 30S subunit, it bridges several disparate RNA helices of the 16S rRNA. Forms part of the Shine-Dalgarno cleft in the 70S ribosome. The polypeptide is Small ribosomal subunit protein uS11 (Cupriavidus metallidurans (strain ATCC 43123 / DSM 2839 / NBRC 102507 / CH34) (Ralstonia metallidurans)).